Here is a 229-residue protein sequence, read N- to C-terminus: Cytidylate kinase (229 aa).

12 to 20 (GPSGVGKST) provides a ligand contact to ATP.

The protein belongs to the cytidylate kinase family. Type 1 subfamily.

It localises to the cytoplasm. It catalyses the reaction CMP + ATP = CDP + ADP. The catalysed reaction is dCMP + ATP = dCDP + ADP. The sequence is that of Cytidylate kinase from Mesomycoplasma hyopneumoniae (strain 7448) (Mycoplasma hyopneumoniae).